The following is a 238-amino-acid chain: Survival of motor neuron-related-splicing factor 30 (238 aa).

Positions 72-132 (SWKVGDKCMA…KPVEEGRKAK (61 aa)) constitute a Tudor domain. A Nuclear localization signal motif is present at residues 142 to 160 (KKEMIAQQREYKKKKALKK). Serine 201 is subject to Phosphoserine. Lysine 219 is subject to N6-acetyllysine.

This sequence belongs to the SMN family. In terms of assembly, associates with spliceosomes. Associates with U4/U5/U6 tri-snRNP and with U2 snRNP. Interacts (via Tudor domain) with SNRPD3 (via C-terminus); the interaction is direct. In terms of tissue distribution, detected at intermediate levels in skeletal muscle, and at low levels in heart and pancreas.

The protein localises to the nucleus speckle. Its subcellular location is the nucleus. The protein resides in the cajal body. In terms of biological role, involved in spliceosome assembly. The polypeptide is Survival of motor neuron-related-splicing factor 30 (SMNDC1) (Homo sapiens (Human)).